A 404-amino-acid chain; its full sequence is tRNA pseudouridine(31) synthase (404 aa).

Residue Asp-168 is part of the active site.

Belongs to the pseudouridine synthase RluA family.

It localises to the cytoplasm. Its subcellular location is the mitochondrion. The enzyme catalyses uridine(31) in tRNA = pseudouridine(31) in tRNA. Catalyzes the formation of pseudouridine at position 31 in the psi GC loop of tRNAS. The protein is tRNA pseudouridine(31) synthase (PUS6) of Saccharomyces cerevisiae (strain ATCC 204508 / S288c) (Baker's yeast).